The primary structure comprises 329 residues: UPF0725 protein EMB2204 (329 aa).

Belongs to the UPF0725 (EMB2204) family.

Its function is as follows. May be involved in embryogenesis. The chain is UPF0725 protein EMB2204 (EMB2204) from Arabidopsis thaliana (Mouse-ear cress).